A 367-amino-acid polypeptide reads, in one-letter code: Polyenoic acids biosynthesis gene cluster protein Ba17b (367 aa).

The next 3 helical transmembrane spans lie at 16-36, 50-70, and 90-110; these read LEVF…LRFY, WLII…IGAV, and LVAF…TEGL. Asn-133 is a glycosylation site (N-linked (GlcNAc...) asparagine). The next 3 helical transmembrane spans lie at 137–157, 183–203, and 211–231; these read LVLV…CTPF, FPNI…VWGL, and LVLV…GGDS. N-linked (GlcNAc...) asparagine glycosylation occurs at Asn-245. The helical transmembrane segment at 259-279 threads the bilayer; it reads LIIWTVCEPGVYLIAACLLVY.

The protein belongs to the SAT4 family.

It localises to the membrane. The protein operates within secondary metabolite biosynthesis. In terms of biological role, part of the gene cluster that mediates the biosynthesis of (2Z,4E,6E,10E)-9-hydroxydodeca-2,4,6,10-tetraenoic acid (BAA), (2E,4E,6E,10E)-9-hydroxydodeca-2,4,6,10-tetraenoic acid (BAB), and (2Z,4E,6E)-octa-2,4,6-trienedioic acid (PBA). The highly reducing polyketide synthase Ba17a is sufficent to produce PBA and BAA. The still to be characterized protein Ba17b leads to an increased production of BAA as well as to the production of the new compound BAB. BAA does not possess insecticidal activity against G.mellonella larvae, however, both BAA and BAB increase the growth of Candida albicans and BAA can mitigate the fungicidal effects of fluconazole over C.albicans, suggesting that generalist pathogens such as M.anisopliae, can potentially manipulate the yeast microbiota found in arthropods (and anywhere else) by the activity of compounds as BAA and BAB. This is Polyenoic acids biosynthesis gene cluster protein Ba17b from Metarhizium anisopliae (Entomophthora anisopliae).